The sequence spans 396 residues: Phosphopentomutase (396 aa).

Residues D14, D286, H291, D327, H328, and H339 each coordinate Mn(2+).

This sequence belongs to the phosphopentomutase family. Mn(2+) serves as cofactor.

It localises to the cytoplasm. The catalysed reaction is 2-deoxy-alpha-D-ribose 1-phosphate = 2-deoxy-D-ribose 5-phosphate. The enzyme catalyses alpha-D-ribose 1-phosphate = D-ribose 5-phosphate. It functions in the pathway carbohydrate degradation; 2-deoxy-D-ribose 1-phosphate degradation; D-glyceraldehyde 3-phosphate and acetaldehyde from 2-deoxy-alpha-D-ribose 1-phosphate: step 1/2. Functionally, isomerase that catalyzes the conversion of deoxy-ribose 1-phosphate (dRib-1-P) and ribose 1-phosphate (Rib-1-P) to deoxy-ribose 5-phosphate (dRib-5-P) and ribose 5-phosphate (Rib-5-P), respectively. In Staphylococcus carnosus (strain TM300), this protein is Phosphopentomutase.